Reading from the N-terminus, the 335-residue chain is NAC domain-containing protein 60 (335 aa).

In terms of domain architecture, NAC spans 14-156 (TFPGFKFSPT…ALVICRLRRN (143 aa)). A DNA-binding region spans residues 112-162 (IGTKRTLVFHIGRAPKGGRTEWLMHEYCMIGVSLDALVICRLRRNTEFQGS). The helical transmembrane segment at 315–335 (ARWDVVVWLLVMIAVLVFYLV) threads the bilayer.

As to expression, expressed in roots, rosette leaves, cauline leaves, shoot apex, stems and flowers.

The protein localises to the membrane. Its subcellular location is the nucleus. Its function is as follows. Transcriptional activator activated by proteolytic cleavage through regulated intramembrane proteolysis (RIP). Transcription factor involved in modulation of abscisic acid (ABA) signaling. Attenuates ABA sensitivity and glucose-induced ABA accumulation. Reduces the expression of ABI4 gene. This Arabidopsis thaliana (Mouse-ear cress) protein is NAC domain-containing protein 60.